The chain runs to 70 residues: Small ribosomal subunit protein bS21 (70 aa).

Belongs to the bacterial ribosomal protein bS21 family.

This Wolinella succinogenes (strain ATCC 29543 / DSM 1740 / CCUG 13145 / JCM 31913 / LMG 7466 / NCTC 11488 / FDC 602W) (Vibrio succinogenes) protein is Small ribosomal subunit protein bS21.